Here is a 449-residue protein sequence, read N- to C-terminus: PC-esterase domain-containing protein 1A (449 aa).

This sequence belongs to the PC-esterase family.

This Mus musculus (Mouse) protein is PC-esterase domain-containing protein 1A (Pced1a).